The following is a 430-amino-acid chain: 3-phosphoshikimate 1-carboxyvinyltransferase (430 aa).

3-phosphoshikimate-binding residues include Lys-20, Ser-21, and Arg-25. Lys-20 contributes to the phosphoenolpyruvate binding site. Phosphoenolpyruvate contacts are provided by Gly-90 and Arg-118. Residues Ser-163, Ser-164, Gln-165, Ser-191, Asp-311, and Lys-338 each contribute to the 3-phosphoshikimate site. Gln-165 provides a ligand contact to phosphoenolpyruvate. Asp-311 functions as the Proton acceptor in the catalytic mechanism. 2 residues coordinate phosphoenolpyruvate: Arg-342 and Arg-383.

It belongs to the EPSP synthase family. In terms of assembly, monomer.

It is found in the cytoplasm. It catalyses the reaction 3-phosphoshikimate + phosphoenolpyruvate = 5-O-(1-carboxyvinyl)-3-phosphoshikimate + phosphate. The protein operates within metabolic intermediate biosynthesis; chorismate biosynthesis. Catalyzes the transfer of the enolpyruvyl moiety of phosphoenolpyruvate (PEP) to the 5-hydroxyl of shikimate-3-phosphate (S3P) to produce enolpyruvyl shikimate-3-phosphate and inorganic phosphate. The protein is 3-phosphoshikimate 1-carboxyvinyltransferase of Methanosarcina mazei (strain ATCC BAA-159 / DSM 3647 / Goe1 / Go1 / JCM 11833 / OCM 88) (Methanosarcina frisia).